The chain runs to 1381 residues: Hepatocyte growth factor receptor (1381 aa).

Positions 1–24 (MKALAVLGPGLLVHLLTLVQKSGG) are cleaved as a signal peptide. The Extracellular segment spans residues 25-932 (ECKEALVKSA…VIVQPDQNFT (908 aa)). The Sema domain maps to 27–515 (KEALVKSAMN…TGKTITKIPL (489 aa)). N-linked (GlcNAc...) asparagine glycans are attached at residues asparagine 45 and asparagine 74. Intrachain disulfides connect cysteine 95/cysteine 101, cysteine 98/cysteine 159, cysteine 133/cysteine 141, cysteine 172/cysteine 175, cysteine 298/cysteine 363, and cysteine 385/cysteine 397. N-linked (GlcNAc...) asparagine glycosylation occurs at asparagine 106. An N-linked (GlcNAc...) asparagine glycan is attached at asparagine 358. Asparagine 399 carries N-linked (GlcNAc...) asparagine glycosylation. Disulfide bonds link cysteine 520/cysteine 538, cysteine 526/cysteine 561, cysteine 529/cysteine 545, and cysteine 541/cysteine 551. IPT/TIG domains follow at residues 563–655 (PTIY…FSYV), 657–739 (PIIT…FNYR), and 742–836 (PIVD…LIYV). Threonine 582 carries an O-linked (Man) threonine glycan. 2 N-linked (GlcNAc...) asparagine glycosylation sites follow: asparagine 607 and asparagine 635. Threonine 676 and threonine 761 each carry an O-linked (Man) threonine glycan. 3 N-linked (GlcNAc...) asparagine glycosylation sites follow: asparagine 785, asparagine 879, and asparagine 930. The chain crosses the membrane as a helical span at residues 933–955 (GLIVGVISISVLLSLLFGLFLWL). The Cytoplasmic portion of the chain corresponds to 956-1381 (KRRKQIKDLG…QDHVDGEGDT (426 aa)). Position 966 is a phosphoserine (serine 966). A Phosphothreonine modification is found at threonine 977. A phosphoserine mark is found at serine 990, serine 997, and serine 1000. Tyrosine 1003 carries the phosphotyrosine modification. The region spanning 1078 to 1345 (VHFNEVIGRG…RISAIFSAFI (268 aa)) is the Protein kinase domain. Residues 1084–1092 (IGRGHFGCV) and lysine 1110 each bind ATP. The Proton acceptor role is filled by aspartate 1204. An interaction with RANBP9 region spans residues 1212–1381 (LDENFTVKVA…QDHVDGEGDT (170 aa)). Position 1230 is a phosphotyrosine (tyrosine 1230). Residues tyrosine 1234 and tyrosine 1235 each carry the phosphotyrosine; by autocatalysis modification. Threonine 1289 is modified (phosphothreonine). The interval 1320–1359 (WHPKAEQRPSFAELVSRISAIFSAFIGEHYVHVNATYVNV) is interaction with MUC20. Residues tyrosine 1349 and tyrosine 1356 each carry the phosphotyrosine; by autocatalysis modification. Tyrosine 1365 is subject to Phosphotyrosine.

The protein belongs to the protein kinase superfamily. Tyr protein kinase family. In terms of assembly, heterodimer made of an alpha chain (50 kDa) and a beta chain (145 kDa) which are disulfide linked. Binds PLXNB1. Interacts when phosphorylated with downstream effectors including STAT3, PIK3R1, SRC, PCLG1, GRB2 and GAB1. Interacts with SPSB1, SPSB2 and SPSB4. Interacts with INPP5D/SHIP1. When phosphorylated at Tyr-1356, interacts with INPPL1/SHIP2. Interacts with RANBP9 and RANBP10, as well as SPSB1, SPSB2, SPSB3 and SPSB4. SPSB1 binding occurs in the presence and in the absence of HGF, however HGF treatment has a positive effect on this interaction. Interacts with MUC20; prevents interaction with GRB2 and suppresses hepatocyte growth factor-induced cell proliferation. Interacts with GRB10. Interacts with PTPN1 and PTPN2. Interacts with HSP90AA1 and HSP90AB1; the interaction suppresses MET kinase activity. Interacts with tensin TNS3. Interacts (when phosphorylated) with tensin TNS4 (via SH2 domain); the interaction increases MET protein stability by inhibiting MET endocytosis and subsequent lysosomal degradation. Post-translationally, autophosphorylated in response to ligand binding on Tyr-1234 and Tyr-1235 in the kinase domain leading to further phosphorylation of Tyr-1349 and Tyr-1356 in the C-terminal multifunctional docking site. Dephosphorylated by PTPRJ at Tyr-1349 and Tyr-1365. Dephosphorylated by PTPN1 and PTPN2. Ubiquitinated. Ubiquitination by CBL regulates the receptor stability and activity through proteasomal degradation. In terms of processing, O-mannosylation of IPT/TIG domains by TMEM260 is required for protein maturation. O-mannosylated residues are composed of single mannose glycans that are not elongated or modified.

It localises to the membrane. It carries out the reaction L-tyrosyl-[protein] + ATP = O-phospho-L-tyrosyl-[protein] + ADP + H(+). With respect to regulation, in its inactive state, the C-terminal tail interacts with the catalytic domain and inhibits the kinase activity. Upon ligand binding, the C-terminal tail is displaced and becomes phosphorylated, thus increasing the kinase activity. In terms of biological role, receptor tyrosine kinase that transduces signals from the extracellular matrix into the cytoplasm by binding to hepatocyte growth factor/HGF ligand. Regulates many physiological processes including proliferation, scattering, morphogenesis and survival. Ligand binding at the cell surface induces autophosphorylation of MET on its intracellular domain that provides docking sites for downstream signaling molecules. Following activation by ligand, interacts with the PI3-kinase subunit PIK3R1, PLCG1, SRC, GRB2, STAT3 or the adapter GAB1. Recruitment of these downstream effectors by MET leads to the activation of several signaling cascades including the RAS-ERK, PI3 kinase-AKT, or PLCgamma-PKC. The RAS-ERK activation is associated with the morphogenetic effects while PI3K/AKT coordinates prosurvival effects. During embryonic development, MET signaling plays a role in gastrulation, development and migration of muscles and neuronal precursors, angiogenesis and kidney formation. In adults, participates in wound healing as well as organ regeneration and tissue remodeling. Also promotes differentiation and proliferation of hematopoietic cells. The protein is Hepatocyte growth factor receptor (MET) of Rhinolophus ferrumequinum (Greater horseshoe bat).